A 384-amino-acid chain; its full sequence is Probable intron-encoded endonuclease Cox1-I1b (384 aa).

Belongs to the LAGLIDADG endonuclease family.

The protein resides in the mitochondrion. In terms of biological role, probable mitochondrial DNA endonuclease involved in intron homing. The protein is Probable intron-encoded endonuclease Cox1-I1b (cox1-I1b) of Schizosaccharomyces pombe (strain 972 / ATCC 24843) (Fission yeast).